Here is a 284-residue protein sequence, read N- to C-terminus: Nucleotide-binding protein TTE1834 (284 aa).

8-15 (GLSGAGKT) lines the ATP pocket. GTP is bound at residue 58-61 (DLRG).

The protein belongs to the RapZ-like family.

Displays ATPase and GTPase activities. In Caldanaerobacter subterraneus subsp. tengcongensis (strain DSM 15242 / JCM 11007 / NBRC 100824 / MB4) (Thermoanaerobacter tengcongensis), this protein is Nucleotide-binding protein TTE1834.